The chain runs to 394 residues: Elongation factor Tu-A (394 aa).

A tr-type G domain is found at 10 to 204; that stretch reads KPHVNVGTIG…ALDTYIPEPE (195 aa). The G1 stretch occupies residues 19–26; that stretch reads GHVDHGKT. 19 to 26 lines the GTP pocket; that stretch reads GHVDHGKT. Mg(2+) is bound at residue Thr26. The tract at residues 60–64 is G2; that stretch reads GITIN. Residues 81–84 are G3; it reads DCPG. Residues 81 to 85 and 136 to 139 contribute to the GTP site; these read DCPGH and NKCD. Residues 136-139 are G4; it reads NKCD. The tract at residues 174-176 is G5; that stretch reads SAL.

The protein belongs to the TRAFAC class translation factor GTPase superfamily. Classic translation factor GTPase family. EF-Tu/EF-1A subfamily. In terms of assembly, monomer.

It localises to the cytoplasm. It carries out the reaction GTP + H2O = GDP + phosphate + H(+). Its function is as follows. GTP hydrolase that promotes the GTP-dependent binding of aminoacyl-tRNA to the A-site of ribosomes during protein biosynthesis. The protein is Elongation factor Tu-A of Vibrio cholerae serotype O1 (strain ATCC 39315 / El Tor Inaba N16961).